Here is a 297-residue protein sequence, read N- to C-terminus: Aspartate dehydrogenase domain-containing protein (297 aa).

2 positions are modified to phosphoserine: Ser-24 and Ser-172.

The protein belongs to the L-aspartate dehydrogenase family.

The chain is Aspartate dehydrogenase domain-containing protein from Rattus norvegicus (Rat).